Reading from the N-terminus, the 184-residue chain is ATP synthase subunit b, chloroplastic (184 aa).

The helical transmembrane segment at 27–49 (LATNPINLSVVLGVLIFFGKGVL) threads the bilayer.

The protein belongs to the ATPase B chain family. As to quaternary structure, F-type ATPases have 2 components, F(1) - the catalytic core - and F(0) - the membrane proton channel. F(1) has five subunits: alpha(3), beta(3), gamma(1), delta(1), epsilon(1). F(0) has four main subunits: a(1), b(1), b'(1) and c(10-14). The alpha and beta chains form an alternating ring which encloses part of the gamma chain. F(1) is attached to F(0) by a central stalk formed by the gamma and epsilon chains, while a peripheral stalk is formed by the delta, b and b' chains.

It localises to the plastid. It is found in the chloroplast thylakoid membrane. Functionally, f(1)F(0) ATP synthase produces ATP from ADP in the presence of a proton or sodium gradient. F-type ATPases consist of two structural domains, F(1) containing the extramembraneous catalytic core and F(0) containing the membrane proton channel, linked together by a central stalk and a peripheral stalk. During catalysis, ATP synthesis in the catalytic domain of F(1) is coupled via a rotary mechanism of the central stalk subunits to proton translocation. Component of the F(0) channel, it forms part of the peripheral stalk, linking F(1) to F(0). In Pelargonium hortorum (Common geranium), this protein is ATP synthase subunit b, chloroplastic.